The primary structure comprises 105 residues: Small ribosomal subunit protein uS10 (105 aa).

Belongs to the universal ribosomal protein uS10 family. As to quaternary structure, part of the 30S ribosomal subunit.

Functionally, involved in the binding of tRNA to the ribosomes. In Oleidesulfovibrio alaskensis (strain ATCC BAA-1058 / DSM 17464 / G20) (Desulfovibrio alaskensis), this protein is Small ribosomal subunit protein uS10.